Here is a 159-residue protein sequence, read N- to C-terminus: Ribosomal RNA large subunit methyltransferase H (159 aa).

Residues leucine 76, glycine 107, and 126-131 (LSKLTM) each bind S-adenosyl-L-methionine.

This sequence belongs to the RNA methyltransferase RlmH family. In terms of assembly, homodimer.

Its subcellular location is the cytoplasm. It catalyses the reaction pseudouridine(1915) in 23S rRNA + S-adenosyl-L-methionine = N(3)-methylpseudouridine(1915) in 23S rRNA + S-adenosyl-L-homocysteine + H(+). Specifically methylates the pseudouridine at position 1915 (m3Psi1915) in 23S rRNA. The chain is Ribosomal RNA large subunit methyltransferase H from Acinetobacter baumannii (strain SDF).